The sequence spans 152 residues: Peptide deformylase (152 aa).

Positions 88 and 130 each coordinate Fe cation. The active site involves Glu131. A Fe cation-binding site is contributed by His134.

It belongs to the polypeptide deformylase family. Fe(2+) serves as cofactor.

It carries out the reaction N-terminal N-formyl-L-methionyl-[peptide] + H2O = N-terminal L-methionyl-[peptide] + formate. In terms of biological role, removes the formyl group from the N-terminal Met of newly synthesized proteins. Requires at least a dipeptide for an efficient rate of reaction. N-terminal L-methionine is a prerequisite for activity but the enzyme has broad specificity at other positions. The polypeptide is Peptide deformylase (Syntrophomonas wolfei subsp. wolfei (strain DSM 2245B / Goettingen)).